A 390-amino-acid chain; its full sequence is Succinate--CoA ligase [ADP-forming] subunit beta (390 aa).

The ATP-grasp domain maps to 9–245; it reads KELLSRYGLP…KSQENEREVK (237 aa). Residues K46, 53–55, E100, Y103, and E108 contribute to the ATP site; that span reads GRG. Residues N200 and D214 each coordinate Mg(2+). Residues N265 and 322-324 contribute to the substrate site; that span reads GIV.

It belongs to the succinate/malate CoA ligase beta subunit family. In terms of assembly, heterotetramer of two alpha and two beta subunits. The cofactor is Mg(2+).

The catalysed reaction is succinate + ATP + CoA = succinyl-CoA + ADP + phosphate. It catalyses the reaction GTP + succinate + CoA = succinyl-CoA + GDP + phosphate. Its pathway is carbohydrate metabolism; tricarboxylic acid cycle; succinate from succinyl-CoA (ligase route): step 1/1. In terms of biological role, succinyl-CoA synthetase functions in the citric acid cycle (TCA), coupling the hydrolysis of succinyl-CoA to the synthesis of either ATP or GTP and thus represents the only step of substrate-level phosphorylation in the TCA. The beta subunit provides nucleotide specificity of the enzyme and binds the substrate succinate, while the binding sites for coenzyme A and phosphate are found in the alpha subunit. This is Succinate--CoA ligase [ADP-forming] subunit beta from Chromobacterium violaceum (strain ATCC 12472 / DSM 30191 / JCM 1249 / CCUG 213 / NBRC 12614 / NCIMB 9131 / NCTC 9757 / MK).